A 354-amino-acid polypeptide reads, in one-letter code: Anthranilate phosphoribosyltransferase (354 aa).

5-phospho-alpha-D-ribose 1-diphosphate contacts are provided by residues glycine 94, 97-98 (GD), threonine 102, 104-107 (NIST), 122-130 (KHGNRAASS), and serine 134. Glycine 94 is a binding site for anthranilate. Residue serine 106 participates in Mg(2+) binding. Asparagine 125 provides a ligand contact to anthranilate. Anthranilate is bound at residue arginine 180. Mg(2+) is bound by residues aspartate 238 and glutamate 239.

The protein belongs to the anthranilate phosphoribosyltransferase family. As to quaternary structure, homodimer. Mg(2+) is required as a cofactor.

The catalysed reaction is N-(5-phospho-beta-D-ribosyl)anthranilate + diphosphate = 5-phospho-alpha-D-ribose 1-diphosphate + anthranilate. The protein operates within amino-acid biosynthesis; L-tryptophan biosynthesis; L-tryptophan from chorismate: step 2/5. Its function is as follows. Catalyzes the transfer of the phosphoribosyl group of 5-phosphorylribose-1-pyrophosphate (PRPP) to anthranilate to yield N-(5'-phosphoribosyl)-anthranilate (PRA). The polypeptide is Anthranilate phosphoribosyltransferase (Streptomyces avermitilis (strain ATCC 31267 / DSM 46492 / JCM 5070 / NBRC 14893 / NCIMB 12804 / NRRL 8165 / MA-4680)).